A 325-amino-acid chain; its full sequence is MIPAVSLGDPQFTANVHDGIARITELINSELSQADEVMRDTVAHLVDAGGTPFRPLFTVLAAQLGSDPDGWEVTVAGAAIELMHLGTLCHDRVVDESDMSRKTPSDNTRWTNNFAILAGDYRFATASQLASRLDPEAFAVVAEAFAELITGQMRATRGPASHIDTIEHYLRVVHEKTGSLIAASGQLGAALSGAAEEQIRRVARLGRMIGAAFEISRDIIAISGDSATLSGADLGQAVHTLPMLYALREQTPDTSRLRELLAGPIHDDHVAEALTLLRCSPGIGKAKNVVAAYAAQAREELPYLPDRQPRRALATLIDHAISACD.

2 residues coordinate isopentenyl diphosphate: Arg54 and His84. Asp91 and Asp95 together coordinate Mg(2+). The DDXXD motif signature appears at 91–95 (DRVVD). Arg101 is an isopentenyl diphosphate binding site. A DDXXD motif motif is present at residues 217–221 (RDIIA).

The protein belongs to the FPP/GGPP synthase family. Mg(2+) is required as a cofactor.

The enzyme catalyses isopentenyl diphosphate + dimethylallyl diphosphate = (2E)-geranyl diphosphate + diphosphate. It functions in the pathway isoprenoid biosynthesis; geranyl diphosphate biosynthesis; geranyl diphosphate from dimethylallyl diphosphate and isopentenyl diphosphate: step 1/1. Its function is as follows. Catalyzes the addition of isopentenyl diphosphate (IPP) onto dimethylallyl diphosphate (DMAPP) to form geranyl pyrophosphate (GPP). Is probably involved in the biosynthesis of decaprenyl diphosphate, which is required for mycobacterial cell wall synthesis. Could be required for host endothelial-cell invasion and/or intracellular survival. The chain is Dimethylallyltranstransferase from Mycobacterium tuberculosis (strain ATCC 25618 / H37Rv).